The sequence spans 238 residues: Ribosome-recycling factor, mitochondrial (238 aa).

This sequence belongs to the RRF family.

It localises to the mitochondrion. Its function is as follows. Responsible for the release of ribosomes from messenger RNA at the termination of protein biosynthesis. May increase the efficiency of translation by recycling ribosomes from one round of translation to another. The chain is Ribosome-recycling factor, mitochondrial from Caenorhabditis elegans.